The chain runs to 399 residues: Phosphoglycerate kinase (399 aa).

Residues D21–N23, R36, H59–R62, R120, and R158 each bind substrate. Residues K209, G297, E328, and G355–S358 contribute to the ATP site.

It belongs to the phosphoglycerate kinase family. As to quaternary structure, monomer.

The protein localises to the cytoplasm. It catalyses the reaction (2R)-3-phosphoglycerate + ATP = (2R)-3-phospho-glyceroyl phosphate + ADP. Its pathway is carbohydrate degradation; glycolysis; pyruvate from D-glyceraldehyde 3-phosphate: step 2/5. This chain is Phosphoglycerate kinase, found in Streptococcus thermophilus (strain ATCC BAA-250 / LMG 18311).